The chain runs to 288 residues: ATP synthase gamma chain (288 aa).

Belongs to the ATPase gamma chain family. F-type ATPases have 2 components, CF(1) - the catalytic core - and CF(0) - the membrane proton channel. CF(1) has five subunits: alpha(3), beta(3), gamma(1), delta(1), epsilon(1). CF(0) has three main subunits: a, b and c.

It localises to the cell inner membrane. In terms of biological role, produces ATP from ADP in the presence of a proton gradient across the membrane. The gamma chain is believed to be important in regulating ATPase activity and the flow of protons through the CF(0) complex. In Vibrio parahaemolyticus serotype O3:K6 (strain RIMD 2210633), this protein is ATP synthase gamma chain.